The sequence spans 426 residues: 5-methylthioadenosine/S-adenosylhomocysteine deaminase (426 aa).

Zn(2+)-binding residues include histidine 60 and histidine 62. Residues glutamate 89 and histidine 179 each contribute to the substrate site. Position 206 (histidine 206) interacts with Zn(2+). The substrate site is built by glutamate 209 and aspartate 294. Aspartate 294 is a binding site for Zn(2+).

The protein belongs to the metallo-dependent hydrolases superfamily. MTA/SAH deaminase family. It depends on Zn(2+) as a cofactor.

It catalyses the reaction S-adenosyl-L-homocysteine + H2O + H(+) = S-inosyl-L-homocysteine + NH4(+). The catalysed reaction is S-methyl-5'-thioadenosine + H2O + H(+) = S-methyl-5'-thioinosine + NH4(+). Catalyzes the deamination of 5-methylthioadenosine and S-adenosyl-L-homocysteine into 5-methylthioinosine and S-inosyl-L-homocysteine, respectively. Is also able to deaminate adenosine. The sequence is that of 5-methylthioadenosine/S-adenosylhomocysteine deaminase from Dictyoglomus thermophilum (strain ATCC 35947 / DSM 3960 / H-6-12).